Here is a 230-residue protein sequence, read N- to C-terminus: MNDLVDTTEMYLRTIYDLEEEGVTPLRARIAERLEQSGPTVSQTVSRMERDGLLRVAGNRHLELTTKGRAMAIAVMRKHRLAERLLVDVIGLPWEEVHAEACRWEHVMSEDVERRLIKVLNNPTTSPFGNPIPGLLDLGAGPDASAANAKLVRLTELPSGSPVAVVVRQLTEHVQDDIDLITRLKDTGVVPNARVTVETSPAGNVIIIIPGHENVTLPHEMAHAVKVEKV.

The 62-residue stretch at 4–65 (LVDTTEMYLR…VAGNRHLELT (62 aa)) folds into the HTH dtxR-type domain.

It belongs to the DtxR/MntR family. In terms of assembly, homodimer.

The protein resides in the cytoplasm. Functionally, metal-dependent DNA-binding protein that controls transcription of many genes involved in iron metabolism. The chain is Iron-dependent repressor IdeR (ideR) from Mycobacterium leprae (strain TN).